Consider the following 379-residue polypeptide: Glutamate 5-kinase (379 aa).

Position 15 (lysine 15) interacts with ATP. Substrate is bound by residues serine 56, aspartate 143, and asparagine 155. Residue 175–176 coordinates ATP; sequence SD. Residues 281 to 358 enclose the PUA domain; that stretch reads RGTLAIDAGA…SDAAQLLGVR (78 aa).

This sequence belongs to the glutamate 5-kinase family.

Its subcellular location is the cytoplasm. It catalyses the reaction L-glutamate + ATP = L-glutamyl 5-phosphate + ADP. It participates in amino-acid biosynthesis; L-proline biosynthesis; L-glutamate 5-semialdehyde from L-glutamate: step 1/2. Catalyzes the transfer of a phosphate group to glutamate to form L-glutamate 5-phosphate. The chain is Glutamate 5-kinase from Nitrobacter winogradskyi (strain ATCC 25391 / DSM 10237 / CIP 104748 / NCIMB 11846 / Nb-255).